The primary structure comprises 377 residues: Succinyl-diaminopimelate desuccinylase (377 aa).

His68 serves as a coordination point for Zn(2+). The active site involves Asp70. Residue Asp101 participates in Zn(2+) binding. Glu135 acts as the Proton acceptor in catalysis. Residues Glu136, Glu164, and His350 each contribute to the Zn(2+) site.

This sequence belongs to the peptidase M20A family. DapE subfamily. In terms of assembly, homodimer. Zn(2+) is required as a cofactor. It depends on Co(2+) as a cofactor.

It catalyses the reaction N-succinyl-(2S,6S)-2,6-diaminopimelate + H2O = (2S,6S)-2,6-diaminopimelate + succinate. It participates in amino-acid biosynthesis; L-lysine biosynthesis via DAP pathway; LL-2,6-diaminopimelate from (S)-tetrahydrodipicolinate (succinylase route): step 3/3. Functionally, catalyzes the hydrolysis of N-succinyl-L,L-diaminopimelic acid (SDAP), forming succinate and LL-2,6-diaminopimelate (DAP), an intermediate involved in the bacterial biosynthesis of lysine and meso-diaminopimelic acid, an essential component of bacterial cell walls. This is Succinyl-diaminopimelate desuccinylase from Acinetobacter baumannii (strain AB0057).